The sequence spans 466 residues: Adenylosuccinate lyase (466 aa).

Substrate contacts are provided by residues 21–22 (RY), 97–99 (NHD), and 130–131 (TS). H180 (proton donor/acceptor) is an active-site residue. Position 259 (Q259) interacts with substrate. S307 acts as the Proton donor/acceptor in catalysis. Substrate contacts are provided by R347, S352, and R356.

Belongs to the lyase 1 family. Adenylosuccinate lyase subfamily. As to quaternary structure, homotetramer. Residues from neighboring subunits contribute catalytic and substrate-binding residues to each active site.

The enzyme catalyses N(6)-(1,2-dicarboxyethyl)-AMP = fumarate + AMP. It carries out the reaction (2S)-2-[5-amino-1-(5-phospho-beta-D-ribosyl)imidazole-4-carboxamido]succinate = 5-amino-1-(5-phospho-beta-D-ribosyl)imidazole-4-carboxamide + fumarate. It functions in the pathway purine metabolism; AMP biosynthesis via de novo pathway; AMP from IMP: step 2/2. It participates in purine metabolism; IMP biosynthesis via de novo pathway; 5-amino-1-(5-phospho-D-ribosyl)imidazole-4-carboxamide from 5-amino-1-(5-phospho-D-ribosyl)imidazole-4-carboxylate: step 2/2. This Dictyostelium discoideum (Social amoeba) protein is Adenylosuccinate lyase (purB).